The chain runs to 1025 residues: DNA polymerase (1025 aa).

This sequence belongs to the DNA polymerase type-B family.

The enzyme catalyses DNA(n) + a 2'-deoxyribonucleoside 5'-triphosphate = DNA(n+1) + diphosphate. Replicates the viral genome. Host DNA polymerases cannot substitute for the viral enzyme in this process. The polypeptide is DNA polymerase (Noctuidae (owlet moths)).